Here is a 381-residue protein sequence, read N- to C-terminus: Putative steryl acetyl hydrolase mug81 (381 aa).

The Cytoplasmic portion of the chain corresponds to 1 to 9 (MISLSLLYR). A helical; Signal-anchor for type II membrane protein membrane pass occupies residues 10–30 (ILTLPIILVGTTILYFTIGTN). At 31-381 (FPHDELRHNL…YTFLRETFEE (351 aa)) the chain is on the lumenal side. An Involved in the stabilization of the negatively charged intermediate by the formation of the oxyanion hole motif is present at residues 125–127 (HGG). An N-linked (GlcNAc...) asparagine glycan is attached at Asn193. Ser200 is a catalytic residue.

The protein belongs to the 'GDXG' lipolytic enzyme family.

The protein resides in the cytoplasm. It is found in the endoplasmic reticulum membrane. In terms of biological role, required for the deacetylation of acetylated sterols. Has a role in meiosis. The protein is Putative steryl acetyl hydrolase mug81 (mug180) of Schizosaccharomyces pombe (strain 972 / ATCC 24843) (Fission yeast).